We begin with the raw amino-acid sequence, 258 residues long: 3-deoxy-manno-octulosonate cytidylyltransferase (258 aa).

This sequence belongs to the KdsB family.

It is found in the cytoplasm. It carries out the reaction 3-deoxy-alpha-D-manno-oct-2-ulosonate + CTP = CMP-3-deoxy-beta-D-manno-octulosonate + diphosphate. It functions in the pathway nucleotide-sugar biosynthesis; CMP-3-deoxy-D-manno-octulosonate biosynthesis; CMP-3-deoxy-D-manno-octulosonate from 3-deoxy-D-manno-octulosonate and CTP: step 1/1. Its pathway is bacterial outer membrane biogenesis; lipopolysaccharide biosynthesis. In terms of biological role, activates KDO (a required 8-carbon sugar) for incorporation into bacterial lipopolysaccharide in Gram-negative bacteria. The chain is 3-deoxy-manno-octulosonate cytidylyltransferase from Gemmatimonas aurantiaca (strain DSM 14586 / JCM 11422 / NBRC 100505 / T-27).